A 706-amino-acid chain; its full sequence is Protein argonaute (706 aa).

Positions 1 to 108 (MGKEALLNLY…ELFRDFLTKT (108 aa)) are N-terminal domain. The interval 109–165 (KVKDKFISDFYKKFRDKITVQGKNRKIALIPEVNEKVLKSEEGYFLLHLDLKFRIQP) is linker L1. In terms of domain architecture, PAZ spans 168–259 (TLQTLLERND…YPATILKPVL (92 aa)). A linker L2 region spans residues 263–334 (NLEDEERNEV…AKGKNTKVIT (72 aa)). Residues 335–448 (NLRKFLELCR…YDFVKRELLK (114 aa)) are mid domain. The Piwi domain maps to 419-694 (LVIVFLEEYP…ITKLMLRGIE (276 aa)). A PIWI domain region spans residues 449-706 (KMIPSQVILN…KKEGDIMYWL (258 aa)). Active-site residues include D502, E541, and D571. D502 provides a ligand contact to Mn(2+). D571 contacts Mn(2+). A PIWI box region spans residues 612–650 (FIKGYFYKLSEDSVILATYNQVYEGTHQPIKVRKVYGEL). Residue D683 is part of the active site. Mn(2+) is bound at residue D683.

The protein belongs to the argonaute family. Long pAgo subfamily. The cofactor is Mg(2+).

A DNA-guided RNA endonuclease. Uses short ssDNA sequences as guides (gDNA) to bind complementary target strands, resulting in cleavage of the target RNA. The cleavage site is 10 nucleotides downstream of the residue base paired with the 5'-end of the gDNA. Binds ssDNA better than ssRNA, binds dsDNA and DNA-RNA hybrids but does not bind dsRNA. A 2 nucleotide 3'-overhang (possibly on the guide strand) may help load nucleic acids into the complex. The chain is Protein argonaute from Aquifex aeolicus (strain VF5).